A 68-amino-acid polypeptide reads, in one-letter code: Long neurotoxin 1 (68 aa).

Cystine bridges form between Cys-3-Cys-20, Cys-13-Cys-41, Cys-26-Cys-30, Cys-45-Cys-56, and Cys-57-Cys-62.

It belongs to the three-finger toxin family. Long-chain subfamily. Type II alpha-neurotoxin sub-subfamily. Expressed by the venom gland.

The protein resides in the secreted. In terms of biological role, binds with high affinity to muscular (alpha-1/CHRNA1) and neuronal (alpha-7/CHRNA7) nicotinic acetylcholine receptor (nAChR) and inhibits acetylcholine from binding to the receptor, thereby impairing neuromuscular and neuronal transmission. The protein is Long neurotoxin 1 of Aspidelaps scutatus (Shield-nose snake).